Here is a 442-residue protein sequence, read N- to C-terminus: Putative neutral sphingomyelinase (442 aa).

Residue E46 participates in Mg(2+) binding. The active-site Proton acceptor is the H264. The segment at 309 to 330 (ALTGEDDQSSQHQPEIQCNGSS) is disordered. Over residues 318 to 330 (SQHQPEIQCNGSS) the composition is skewed to polar residues. The next 2 helical transmembrane spans lie at 362–384 (RILY…EFTA) and 391–413 (IFLL…ASIW).

Belongs to the neutral sphingomyelinase family.

Its subcellular location is the membrane. It catalyses the reaction a sphingomyelin + H2O = phosphocholine + an N-acylsphing-4-enine + H(+). It functions in the pathway lipid metabolism; sphingolipid metabolism. The sequence is that of Putative neutral sphingomyelinase from Drosophila melanogaster (Fruit fly).